Reading from the N-terminus, the 332-residue chain is 4-hydroxythreonine-4-phosphate dehydrogenase (332 aa).

Substrate contacts are provided by histidine 136 and threonine 137. A divalent metal cation contacts are provided by histidine 166, histidine 211, and histidine 266. Substrate is bound by residues lysine 274, asparagine 283, and arginine 292.

The protein belongs to the PdxA family. Homodimer. The cofactor is Zn(2+). Mg(2+) is required as a cofactor. It depends on Co(2+) as a cofactor.

Its subcellular location is the cytoplasm. It catalyses the reaction 4-(phosphooxy)-L-threonine + NAD(+) = 3-amino-2-oxopropyl phosphate + CO2 + NADH. It functions in the pathway cofactor biosynthesis; pyridoxine 5'-phosphate biosynthesis; pyridoxine 5'-phosphate from D-erythrose 4-phosphate: step 4/5. Functionally, catalyzes the NAD(P)-dependent oxidation of 4-(phosphooxy)-L-threonine (HTP) into 2-amino-3-oxo-4-(phosphooxy)butyric acid which spontaneously decarboxylates to form 3-amino-2-oxopropyl phosphate (AHAP). The polypeptide is 4-hydroxythreonine-4-phosphate dehydrogenase (Wigglesworthia glossinidia brevipalpis).